The following is a 366-amino-acid chain: Chorismate synthase (366 aa).

Residue arginine 48 coordinates NADP(+). FMN contacts are provided by residues 131–133, 243–244, glycine 288, 303–307, and arginine 329; these read RAS, NA, and KPTSS.

This sequence belongs to the chorismate synthase family. As to quaternary structure, homotetramer. Requires FMNH2 as cofactor.

The enzyme catalyses 5-O-(1-carboxyvinyl)-3-phosphoshikimate = chorismate + phosphate. Its pathway is metabolic intermediate biosynthesis; chorismate biosynthesis; chorismate from D-erythrose 4-phosphate and phosphoenolpyruvate: step 7/7. In terms of biological role, catalyzes the anti-1,4-elimination of the C-3 phosphate and the C-6 proR hydrogen from 5-enolpyruvylshikimate-3-phosphate (EPSP) to yield chorismate, which is the branch point compound that serves as the starting substrate for the three terminal pathways of aromatic amino acid biosynthesis. This reaction introduces a second double bond into the aromatic ring system. In Bartonella henselae (strain ATCC 49882 / DSM 28221 / CCUG 30454 / Houston 1) (Rochalimaea henselae), this protein is Chorismate synthase.